Reading from the N-terminus, the 296-residue chain is Phosphoribosylaminoimidazole-succinocarboxamide synthase (296 aa).

It belongs to the SAICAR synthetase family.

It catalyses the reaction 5-amino-1-(5-phospho-D-ribosyl)imidazole-4-carboxylate + L-aspartate + ATP = (2S)-2-[5-amino-1-(5-phospho-beta-D-ribosyl)imidazole-4-carboxamido]succinate + ADP + phosphate + 2 H(+). Its pathway is purine metabolism; IMP biosynthesis via de novo pathway; 5-amino-1-(5-phospho-D-ribosyl)imidazole-4-carboxamide from 5-amino-1-(5-phospho-D-ribosyl)imidazole-4-carboxylate: step 1/2. The polypeptide is Phosphoribosylaminoimidazole-succinocarboxamide synthase (Syntrophotalea carbinolica (strain DSM 2380 / NBRC 103641 / GraBd1) (Pelobacter carbinolicus)).